Here is a 103-residue protein sequence, read N- to C-terminus: MAAQQDIRIKLKSYDHTLIDKSAEKIIRTVKSTGAVVSGPVPLPTEKKIYTVLRGPHVDKKSREQFERRHHKRLIDILSSSSDTVDSLMQLELPSGVDVEIKV.

The protein belongs to the universal ribosomal protein uS10 family. As to quaternary structure, part of the 30S ribosomal subunit.

Functionally, involved in the binding of tRNA to the ribosomes. The sequence is that of Small ribosomal subunit protein uS10 from Salinibacter ruber (strain DSM 13855 / M31).